The following is a 265-amino-acid chain: Hydroxyethylthiazole kinase (265 aa).

Met-43 lines the substrate pocket. Positions 118 and 165 each coordinate ATP. Residue Gly-192 coordinates substrate.

The protein belongs to the Thz kinase family. The cofactor is Mg(2+).

It carries out the reaction 5-(2-hydroxyethyl)-4-methylthiazole + ATP = 4-methyl-5-(2-phosphooxyethyl)-thiazole + ADP + H(+). It functions in the pathway cofactor biosynthesis; thiamine diphosphate biosynthesis; 4-methyl-5-(2-phosphoethyl)-thiazole from 5-(2-hydroxyethyl)-4-methylthiazole: step 1/1. In terms of biological role, catalyzes the phosphorylation of the hydroxyl group of 4-methyl-5-beta-hydroxyethylthiazole (THZ). The sequence is that of Hydroxyethylthiazole kinase from Pyrococcus abyssi (strain GE5 / Orsay).